Reading from the N-terminus, the 128-residue chain is Protein BEX1 (128 aa).

The tract at residues methionine 1–leucine 37 is disordered. Serine 105 carries the post-translational modification Phosphoserine. Positions serine 107 to proline 128 are disordered. The span at proline 115–proline 128 shows a compositional bias: basic and acidic residues. Positions histidine 117–histidine 121 are his cluster. Cysteine 125 serves as a coordination point for Zn(2+).

This sequence belongs to the BEX family. Interacts with neurotrophin receptor p75NTR/NGFR. Interacts with OMP. Phosphorylated. Phosphorylation of Ser-105 protects it from the proteasome. Post-translationally, ubiquitinated. Degraded by the proteasome.

The protein localises to the nucleus. Its subcellular location is the cytoplasm. Its function is as follows. Signaling adapter molecule involved in p75NTR/NGFR signaling. Plays a role in cell cycle progression and neuronal differentiation. Inhibits neuronal differentiation in response to nerve growth factor (NGF). May act as a link between the cell cycle and neurotrophic factor signaling, possibly by functioning as an upstream modulator of receptor signaling, coordinating biological responses to external signals with internal cellular states. In absence of reductive stress, acts as a pseudosubstrate for the CRL2(FEM1B) complex: associates with FEM1B via zinc, thereby preventing association between FEM1B and its substrates. The sequence is that of Protein BEX1 (BEX1) from Macaca fascicularis (Crab-eating macaque).